The following is a 95-amino-acid chain: Opiscorpine-1 (95 aa).

The N-terminal stretch at 1–19 (MNNKLTALIFLGLLAIASC) is a signal peptide. Residues 55 to 95 (EFMCVANVDMTKSCDTHCQKASGEKGYCHGTKCKCGVPLSY) enclose the BetaSPN-type CS-alpha/beta domain. 3 cysteine pairs are disulfide-bonded: Cys-58–Cys-82, Cys-68–Cys-87, and Cys-72–Cys-89.

It belongs to the long chain scorpion toxin family. Class 3 subfamily. In terms of tissue distribution, expressed by the venom gland.

Its subcellular location is the secreted. Functionally, the short synthetic peptide (20-54) has antimicrobial activity against the yeasts F.culmorum (IC(50)=8.8 uM) and F.oxysporum (IC(50)=10 uM), and the Gram-negative bacteria E.coli. The sequence is that of Opiscorpine-1 from Opistophthalmus carinatus (African yellow leg scorpion).